A 1385-amino-acid chain; its full sequence is DNA-directed RNA polymerase subunit beta (1385 aa).

Belongs to the RNA polymerase beta chain family. As to quaternary structure, the RNAP catalytic core consists of 2 alpha, 1 beta, 1 beta' and 1 omega subunit. When a sigma factor is associated with the core the holoenzyme is formed, which can initiate transcription.

The enzyme catalyses RNA(n) + a ribonucleoside 5'-triphosphate = RNA(n+1) + diphosphate. Functionally, DNA-dependent RNA polymerase catalyzes the transcription of DNA into RNA using the four ribonucleoside triphosphates as substrates. This Jannaschia sp. (strain CCS1) protein is DNA-directed RNA polymerase subunit beta.